Consider the following 529-residue polypeptide: Probable DNA helicase MPN_340 (529 aa).

Residues 2 to 285 (EHLNQEQKAA…FYTTQNYRSI (284 aa)) form the UvrD-like helicase ATP-binding domain. Residue 23–30 (SGAGTGKT) coordinates ATP.

It belongs to the helicase family. UvrD subfamily.

The catalysed reaction is Couples ATP hydrolysis with the unwinding of duplex DNA by translocating in the 3'-5' direction.. It carries out the reaction ATP + H2O = ADP + phosphate + H(+). This Mycoplasma pneumoniae (strain ATCC 29342 / M129 / Subtype 1) (Mycoplasmoides pneumoniae) protein is Probable DNA helicase MPN_340.